A 421-amino-acid polypeptide reads, in one-letter code: Histone-lysine N-methyltransferase SUV39H1 (421 aa).

Residues 46 to 104 (FEVEYLWNYKKVQDQELYLVKWKYYPDSESTWEPRHHLKCNNLLKQFHLDLERELLRRA) enclose the Chromo domain. The Pre-SET domain maps to 189-249 (AGCKCRDCFS…SCPNRVVQKG (61 aa)). C191, C193, C196, C203, C204, C231, C235, C237, and C241 together coordinate Zn(2+). The SET domain occupies 252–375 (YKFCIFRTSD…TGEELTFDYN (124 aa)). S-adenosyl-L-methionine is bound by residues 263-265 (RGW), Y306, and 332-333 (NH). Residues C335, C409, C411, and C416 each contribute to the Zn(2+) site. Residues 405–421 (VRVECKCGVSSCRKYLF) form the Post-SET domain.

This sequence belongs to the class V-like SAM-binding methyltransferase superfamily. Histone-lysine methyltransferase family. Suvar3-9 subfamily.

Its subcellular location is the nucleus. The protein localises to the chromosome. The protein resides in the centromere. The enzyme catalyses L-lysyl(9)-[histone H3] + 3 S-adenosyl-L-methionine = N(6),N(6),N(6)-trimethyl-L-lysyl(9)-[histone H3] + 3 S-adenosyl-L-homocysteine + 3 H(+). Functionally, histone methyltransferase that specifically trimethylates 'Lys-9' of histone H3 using monomethylated H3 'Lys-9' as substrate. H3 'Lys-9' trimethylation represents a specific tag for epigenetic transcriptional repression by recruiting HP1 (CBX1, CBX3 and/or CBX5) proteins to methylated histones. Mainly functions in heterochromatin regions, thereby playing a central role in the establishment of constitutive heterochromatin at pericentric and telomere regions. H3 'Lys-9' trimethylation is also required to direct DNA methylation at pericentric repeats. SUV39H1 is targeted to histone H3 via its interaction with RB1 and is involved in many processes. The polypeptide is Histone-lysine N-methyltransferase SUV39H1 (suv39h1) (Xenopus laevis (African clawed frog)).